A 254-amino-acid chain; its full sequence is Thiazole synthase (254 aa).

The Schiff-base intermediate with DXP role is filled by Lys-95. Residues Gly-156, 182-183, and 204-205 each bind 1-deoxy-D-xylulose 5-phosphate; these read AG and NT.

This sequence belongs to the ThiG family. As to quaternary structure, homotetramer. Forms heterodimers with either ThiH or ThiS.

The protein resides in the cytoplasm. It carries out the reaction [ThiS sulfur-carrier protein]-C-terminal-Gly-aminoethanethioate + 2-iminoacetate + 1-deoxy-D-xylulose 5-phosphate = [ThiS sulfur-carrier protein]-C-terminal Gly-Gly + 2-[(2R,5Z)-2-carboxy-4-methylthiazol-5(2H)-ylidene]ethyl phosphate + 2 H2O + H(+). It functions in the pathway cofactor biosynthesis; thiamine diphosphate biosynthesis. In terms of biological role, catalyzes the rearrangement of 1-deoxy-D-xylulose 5-phosphate (DXP) to produce the thiazole phosphate moiety of thiamine. Sulfur is provided by the thiocarboxylate moiety of the carrier protein ThiS. In vitro, sulfur can be provided by H(2)S. The sequence is that of Thiazole synthase from Shewanella baltica (strain OS195).